The primary structure comprises 159 residues: Immunoglobulin J chain (159 aa).

The N-terminal stretch at 1-21 is a signal peptide; that stretch reads MKTHLLLWGVLAIFVKAVLVT. 3 disulfides stabilise this stretch: Cys-34/Cys-123, Cys-93/Cys-113, and Cys-131/Cys-156. N-linked (GlcNAc...) (complex) asparagine glycosylation is present at Asn-70.

In terms of assembly, part of the secretory IgA (sIgA) complex that consists of two, four or five IgA monomers, and two additional non-Ig polypeptides, namely the JCHAIN and the secretory component (the proteolytic product of PIGR). Part of the secretory IgM (sIgM) complex that consist of five IgM monomers, and two additional non-Ig polypeptides, namely the JCHAIN and the secretory component (the proteolytic product of PIGR). JCHAIN-containing IgM interacts (via CH4 domain) with FCRM (via Ig-like domain).

It is found in the secreted. Serves to link two monomer units of either IgM or IgA. In the case of IgM, the J chain-joined dimer is a nucleating unit for the IgM pentamer, and in the case of IgA it induces dimers and/or larger polymers. It also helps to bind these immunoglobulins to secretory component. The polypeptide is Immunoglobulin J chain (Mus musculus (Mouse)).